The chain runs to 213 residues: MYQDKILVRQLGLQPYEPISQAMHEFTDTRDDSTLDEIWLVEHYPVFTQGQAGKAEHILMPGDIPVIQSDRGGQVTYHGPGQQVMYVLLNLKRRKLGVRELVTLLEQTVVNTLAELGIEAHPRADAPGVYVGEKKICSLGLRIRRGCSFHGLALNVNMDLSPFLRINPCGYAGMEMAKISQWKPEATTNNIAPRLLENILALLNNPDFEYITA.

Residues 32 to 207 form the BPL/LPL catalytic domain; sequence DSTLDEIWLV…NILALLNNPD (176 aa). Substrate is bound by residues 71-78, 138-140, and 151-153; these read RGGQVTYH, SLG, and GLA. The active-site Acyl-thioester intermediate is the C169.

This sequence belongs to the LipB family.

It is found in the cytoplasm. It catalyses the reaction octanoyl-[ACP] + L-lysyl-[protein] = N(6)-octanoyl-L-lysyl-[protein] + holo-[ACP] + H(+). Its pathway is protein modification; protein lipoylation via endogenous pathway; protein N(6)-(lipoyl)lysine from octanoyl-[acyl-carrier-protein]: step 1/2. In terms of biological role, catalyzes the transfer of endogenously produced octanoic acid from octanoyl-acyl-carrier-protein onto the lipoyl domains of lipoate-dependent enzymes. Lipoyl-ACP can also act as a substrate although octanoyl-ACP is likely to be the physiological substrate. This Escherichia coli O8 (strain IAI1) protein is Octanoyltransferase.